We begin with the raw amino-acid sequence, 694 residues long: Methionine--tRNA ligase (694 aa).

The short motif at P12–H22 is the 'HIGH' region element. Residues C143, C146, C156, and C159 each contribute to the Zn(2+) site. A 'KMSKS' region motif is present at residues K330–S334. K333 is an ATP binding site. Low complexity predominate over residues L550–A575. Residues L550 to P580 are disordered. The tRNA-binding domain maps to D591–R694.

Belongs to the class-I aminoacyl-tRNA synthetase family. MetG type 1 subfamily. Homodimer. Zn(2+) is required as a cofactor.

The protein resides in the cytoplasm. It catalyses the reaction tRNA(Met) + L-methionine + ATP = L-methionyl-tRNA(Met) + AMP + diphosphate. Its function is as follows. Is required not only for elongation of protein synthesis but also for the initiation of all mRNA translation through initiator tRNA(fMet) aminoacylation. The protein is Methionine--tRNA ligase of Xanthomonas oryzae pv. oryzae (strain MAFF 311018).